Here is a 526-residue protein sequence, read N- to C-terminus: Vitamin B6 transporter bsu1 (526 aa).

The tract at residues 1–53 is disordered; it reads MASKIASLFSPSETASKDQHENVAEDLELGTASSQSDGIHETNSEYDEKKREE. A compositionally biased stretch (basic and acidic residues) spans 38-53; it reads GIHETNSEYDEKKREE. Helical transmembrane passes span 81 to 101, 118 to 138, 147 to 167, 173 to 192, 204 to 224, 238 to 257, 314 to 330, 349 to 366, 387 to 407, 413 to 432, 444 to 461, and 480 to 501; these read WSIVFMFCLMQIYVIWTSNGF, VATLCLSMNILGSGLGPMFLG, KPVYFCSIFVYTVFNISCALP, MIISHFIIGVAGSTALTNVA, AGVPMSLFVWACAGGAIGAPM, WLYYINIIVGGFFLIVILII, LYNFYAYGISYFFLTAI, YLSGFVASTLLFLYQPIQ, FTSALFITLLFPAGMFLFAFT, PWMSPIVGNSMVTVANGHNW, PLLSGSAVAAFTLPSFIG, and WAVATMAFISISIPFIIYTFYF.

This sequence belongs to the major facilitator superfamily. CAR1 family.

The protein localises to the membrane. Its function is as follows. Thiamine-regulated, high affinity import carrier of pyridoxine, pyridoxal and pyridoxamine. Also imports, but does not export, amiloride and so confers sensitivity. This is Vitamin B6 transporter bsu1 (bsu1) from Schizosaccharomyces pombe (strain 972 / ATCC 24843) (Fission yeast).